Consider the following 598-residue polypeptide: Elongation factor 4 (598 aa).

A tr-type G domain is found at 4–186 (DHIRNFSIIA…AIVKRVPPPK (183 aa)). Residues 16–21 (DHGKST) and 133–136 (NKID) each bind GTP.

It belongs to the TRAFAC class translation factor GTPase superfamily. Classic translation factor GTPase family. LepA subfamily.

The protein localises to the cell inner membrane. It catalyses the reaction GTP + H2O = GDP + phosphate + H(+). In terms of biological role, required for accurate and efficient protein synthesis under certain stress conditions. May act as a fidelity factor of the translation reaction, by catalyzing a one-codon backward translocation of tRNAs on improperly translocated ribosomes. Back-translocation proceeds from a post-translocation (POST) complex to a pre-translocation (PRE) complex, thus giving elongation factor G a second chance to translocate the tRNAs correctly. Binds to ribosomes in a GTP-dependent manner. The protein is Elongation factor 4 of Magnetococcus marinus (strain ATCC BAA-1437 / JCM 17883 / MC-1).